We begin with the raw amino-acid sequence, 293 residues long: Nucleotide-binding protein BBR47_52620 (293 aa).

An ATP-binding site is contributed by 17–24; sequence GMSGAGKT. A GTP-binding site is contributed by 68 to 71; it reads DLRG.

Belongs to the RapZ-like family.

Functionally, displays ATPase and GTPase activities. In Brevibacillus brevis (strain 47 / JCM 6285 / NBRC 100599), this protein is Nucleotide-binding protein BBR47_52620.